We begin with the raw amino-acid sequence, 148 residues long: PTS system fructose-like EIIA component (148 aa).

Positions 2 to 145 constitute a PTS EIIA type-2 domain; that stretch reads AALTASCIDL…DQVLALLNQT (144 aa). The active-site Tele-phosphohistidine intermediate is His64. His64 carries the post-translational modification Phosphohistidine; by HPr.

It is found in the cytoplasm. Functionally, the phosphoenolpyruvate-dependent sugar phosphotransferase system (sugar PTS), a major carbohydrate active transport system, catalyzes the phosphorylation of incoming sugar substrates concomitantly with their translocation across the cell membrane. The enzyme II FrvAB PTS system is involved in fructose transport. The protein is PTS system fructose-like EIIA component of Escherichia coli (strain K12).